Consider the following 362-residue polypeptide: S-adenosylmethionine:tRNA ribosyltransferase-isomerase (362 aa).

It belongs to the QueA family. Monomer.

It localises to the cytoplasm. It catalyses the reaction 7-aminomethyl-7-carbaguanosine(34) in tRNA + S-adenosyl-L-methionine = epoxyqueuosine(34) in tRNA + adenine + L-methionine + 2 H(+). The protein operates within tRNA modification; tRNA-queuosine biosynthesis. Transfers and isomerizes the ribose moiety from AdoMet to the 7-aminomethyl group of 7-deazaguanine (preQ1-tRNA) to give epoxyqueuosine (oQ-tRNA). This is S-adenosylmethionine:tRNA ribosyltransferase-isomerase from Xanthobacter autotrophicus (strain ATCC BAA-1158 / Py2).